A 194-amino-acid chain; its full sequence is MAHGAKYRVPFRRRREGKTNFRLRLKLLLSRTPRLVARKSLNNIVAQIVEYDEVGDKIVVSAHSKEIVKLGYKGHCGNVPAAYLTGLLLGKKALKEGNEEAILDLGLNSATKGAAVLAILKGAVDAGMDIPHSEEILPGEDRINGSHVKEYAELLKVEDEEKYNKQFSKYLKNGLNPEDLPEHFEEIKEKILSL.

This sequence belongs to the universal ribosomal protein uL18 family. In terms of assembly, part of the 50S ribosomal subunit. Contacts the 5S and 23S rRNAs.

Its function is as follows. This is one of the proteins that bind and probably mediate the attachment of the 5S RNA into the large ribosomal subunit, where it forms part of the central protuberance. The polypeptide is Large ribosomal subunit protein uL18 (Methanococcus aeolicus (strain ATCC BAA-1280 / DSM 17508 / OCM 812 / Nankai-3)).